A 752-amino-acid chain; its full sequence is Polyribonucleotide nucleotidyltransferase (752 aa).

Residues D529 and D535 each coordinate Mg(2+). The 60-residue stretch at 595 to 654 (PRVTTIKVPVDKIGEVIGPKGKVINAITEETGAQISIEDDGTVFVGATDGPSAQAAIDKI) folds into the KH domain. In terms of domain architecture, S1 motif spans 666–735 (GERFLGTVVK…KRGKISLILV (70 aa)).

Belongs to the polyribonucleotide nucleotidyltransferase family. The cofactor is Mg(2+).

The protein resides in the cytoplasm. It carries out the reaction RNA(n+1) + phosphate = RNA(n) + a ribonucleoside 5'-diphosphate. Functionally, involved in mRNA degradation. Catalyzes the phosphorolysis of single-stranded polyribonucleotides processively in the 3'- to 5'-direction. In Mycobacterium tuberculosis (strain ATCC 25177 / H37Ra), this protein is Polyribonucleotide nucleotidyltransferase.